A 260-amino-acid chain; its full sequence is 23S rRNA (guanosine-2'-O-)-methyltransferase RlmB (260 aa).

Gly197, Ile217, and Leu226 together coordinate S-adenosyl-L-methionine.

This sequence belongs to the class IV-like SAM-binding methyltransferase superfamily. RNA methyltransferase TrmH family. RlmB subfamily.

It localises to the cytoplasm. It catalyses the reaction guanosine(2251) in 23S rRNA + S-adenosyl-L-methionine = 2'-O-methylguanosine(2251) in 23S rRNA + S-adenosyl-L-homocysteine + H(+). Specifically methylates the ribose of guanosine 2251 in 23S rRNA. This chain is 23S rRNA (guanosine-2'-O-)-methyltransferase RlmB, found in Nitrosomonas europaea (strain ATCC 19718 / CIP 103999 / KCTC 2705 / NBRC 14298).